The chain runs to 522 residues: DNA primase DnaG (522 aa).

The Toprim domain maps to 171 to 257 (DAIIILEGRA…CVEDLVQKEI (87 aa)). 3 residues coordinate Mg(2+): glutamate 177, aspartate 219, and aspartate 221.

It belongs to the archaeal DnaG primase family. Forms a ternary complex with MCM helicase and DNA. Component of the archaeal exosome complex. The cofactor is Mg(2+).

It carries out the reaction ssDNA + n NTP = ssDNA/pppN(pN)n-1 hybrid + (n-1) diphosphate.. Its function is as follows. RNA polymerase that catalyzes the synthesis of short RNA molecules used as primers for DNA polymerase during DNA replication. Also part of the exosome, which is a complex involved in RNA degradation. Acts as a poly(A)-binding protein that enhances the interaction between heteromeric, adenine-rich transcripts and the exosome. The polypeptide is DNA primase DnaG (Methanosarcina mazei (strain ATCC BAA-159 / DSM 3647 / Goe1 / Go1 / JCM 11833 / OCM 88) (Methanosarcina frisia)).